The chain runs to 359 residues: Guanine nucleotide-binding protein subunit alpha-11 (359 aa).

Residues cysteine 9 and cysteine 10 are each lipidated (S-palmitoyl cysteine). The region spanning 38–359 (RELKLLLLGT…QHNLKEYNLV (322 aa)) is the G-alpha domain. Residues 41–54 (KLLLLGTGESGKST) are G1 motif. Residues 46-53 (GTGESGKS) and 180-183 (LRVR) contribute to the GTP site. Serine 53 contacts Mg(2+). The interval 178–186 (DVLRVRVPT) is G2 motif. Threonine 186 contacts Mg(2+). The tract at residues 201-210 (FRMVDVGGQR) is G3 motif. A G4 motif region spans residues 270 to 277 (ILFLNKKD). GTP is bound by residues 274–277 (NKKD) and alanine 331. The tract at residues 329-334 (TCATDT) is G5 motif.

This sequence belongs to the G-alpha family. G(q) subfamily. G proteins are composed of 3 units; alpha, beta and gamma. The alpha chain contains the guanine nucleotide binding site.

It is found in the cell membrane. The protein resides in the cytoplasm. The enzyme catalyses GTP + H2O = GDP + phosphate + H(+). Its function is as follows. Guanine nucleotide-binding proteins (G proteins) function as transducers downstream of G protein-coupled receptors (GPCRs) in numerous signaling cascades. The alpha chain contains the guanine nucleotide binding site and alternates between an active, GTP-bound state and an inactive, GDP-bound state. Signaling by an activated GPCR promotes GDP release and GTP binding. The alpha subunit has a low GTPase activity that converts bound GTP to GDP, thereby terminating the signal. Both GDP release and GTP hydrolysis are modulated by numerous regulatory proteins. Signaling is mediated via phospholipase C-beta-dependent inositol lipid hydrolysis for signal propagation: activates phospholipase C-beta: following GPCR activation, GNA11 activates PLC-beta (PLCB1, PLCB2, PLCB3 or PLCB4), leading to production of diacylglycerol (DAG) and inositol 1,4,5-trisphosphate (IP3). The sequence is that of Guanine nucleotide-binding protein subunit alpha-11 (gna11) from Xenopus laevis (African clawed frog).